Here is a 367-residue protein sequence, read N- to C-terminus: Cytochrome b (367 aa).

A run of 4 helical transmembrane segments spans residues 20–40 (MGSI…LLSM), 64–85 (WFLR…YAHI), 101–121 (WMVG…GYVL), and 166–186 (FFSL…LHII). Heme b-binding residues include H70 and H84. H170 and H184 together coordinate heme b. H189 contributes to the a ubiquinone binding site. 4 helical membrane-spanning segments follow: residues 214–234 (IKDS…TFFS), 276–296 (LGGV…PLSS), 308–328 (IYQV…WLGA), and 335–355 (YLSL…LLGM).

This sequence belongs to the cytochrome b family. In terms of assembly, the main subunits of complex b-c1 are: cytochrome b, cytochrome c1 and the Rieske protein. Heme b serves as cofactor.

Its subcellular location is the mitochondrion inner membrane. In terms of biological role, component of the ubiquinol-cytochrome c reductase complex (complex III or cytochrome b-c1 complex) that is part of the mitochondrial respiratory chain. The b-c1 complex mediates electron transfer from ubiquinol to cytochrome c. Contributes to the generation of a proton gradient across the mitochondrial membrane that is then used for ATP synthesis. In Albinaria caerulea (Land snail), this protein is Cytochrome b (MT-CYB).